The following is a 439-amino-acid chain: uncharacterized protein (439 aa).

Positions 268–284 (QQQQQQQPQHNNNNTQV) are enriched in low complexity. The segment at 268-439 (QQQQQQQPQH…RTRFTTTNLH (172 aa)) is disordered. Pro residues predominate over residues 285–328 (QPPPPSQQLPPPPKPQPQLPKPQPQKPQPQLPKPPQQPKPPQEP). Residues 350–439 (QEQQQQPPQE…RTRFTTTNLH (90 aa)) are compositionally biased toward low complexity.

This is an uncharacterized protein from Dictyostelium discoideum (Social amoeba).